Consider the following 214-residue polypeptide: Ribonuclease P protein component 3 (214 aa).

The protein belongs to the eukaryotic/archaeal RNase P protein component 3 family. As to quaternary structure, consists of a catalytic RNA component and at least 4-5 protein subunits. Forms a subcomplex with Rnp2 which stimulates the catalytic RNA.

It is found in the cytoplasm. The catalysed reaction is Endonucleolytic cleavage of RNA, removing 5'-extranucleotides from tRNA precursor.. In terms of biological role, part of ribonuclease P, a protein complex that generates mature tRNA molecules by cleaving their 5'-ends. The RNA is catalytic, but its KM for pre-tRNA is 170-fold decreased in the presence of the 4 known protein subunits (Rnp1-4). The protein subunits also decrease the amount of Mg(2+) needed for activity. The protein is Ribonuclease P protein component 3 of Pyrococcus furiosus (strain ATCC 43587 / DSM 3638 / JCM 8422 / Vc1).